The sequence spans 160 residues: Large ribosomal subunit protein eL21 (160 aa).

Belongs to the eukaryotic ribosomal protein eL21 family.

In Encephalitozoon cuniculi (strain GB-M1) (Microsporidian parasite), this protein is Large ribosomal subunit protein eL21 (RPL21).